The primary structure comprises 299 residues: Tyrosine recombinase XerC (299 aa).

The Core-binding (CB) domain occupies 1 to 85 (MQNELDAYFE…SVRGLYRYLN (85 aa)). The Tyr recombinase domain occupies 106–285 (RLPRLLDTDR…DFQHLAKVYD (180 aa)). Residues arginine 146, lysine 170, histidine 237, arginine 240, and histidine 263 contribute to the active site. The O-(3'-phospho-DNA)-tyrosine intermediate role is filled by tyrosine 272.

The protein belongs to the 'phage' integrase family. XerC subfamily. As to quaternary structure, forms a cyclic heterotetrameric complex composed of two molecules of XerC and two molecules of XerD.

The protein resides in the cytoplasm. Its function is as follows. Site-specific tyrosine recombinase, which acts by catalyzing the cutting and rejoining of the recombining DNA molecules. The XerC-XerD complex is essential to convert dimers of the bacterial chromosome into monomers to permit their segregation at cell division. It also contributes to the segregational stability of plasmids. This Stutzerimonas stutzeri (strain A1501) (Pseudomonas stutzeri) protein is Tyrosine recombinase XerC.